The chain runs to 183 residues: U3 small nucleolar ribonucleoprotein protein imp3 (183 aa).

The S4 RNA-binding domain maps to 108–174 (RRLPVVMRNI…IKKHVMDYNN (67 aa)).

The protein belongs to the universal ribosomal protein uS4 family. In terms of assembly, component of a heterotrimeric complex containing imp3, imp4 and mpp10.

The protein resides in the nucleus. The protein localises to the nucleolus. In terms of biological role, component of the U3 small nucleolar ribonucleoprotein. Required for the early cleavages at sites A0, A1 and A2 during 18S ribosomal pre-RNA processing. This Caenorhabditis elegans protein is U3 small nucleolar ribonucleoprotein protein imp3.